We begin with the raw amino-acid sequence, 171 residues long: Large ribosomal subunit protein uL24 (171 aa).

Residues 1-124 (MNIKTGDTVV…AKPAKTKAEK (124 aa)) form a large ribosomal subunit protein uL24 region. Residues 108-171 (GQTLDKAAKP…SVQKKGASGK (64 aa)) form a disordered region. The segment at 125–171 (VEKAATSSTDKPAKVTKAAKEAKPVKAVKSQKVEKNTSVQKKGASGK) is unknown.

Belongs to the universal ribosomal protein uL24 family. In terms of assembly, part of the 50S ribosomal subunit.

Its function is as follows. One of two assembly initiator proteins, it binds directly to the 5'-end of the 23S rRNA, where it nucleates assembly of the 50S subunit. In terms of biological role, one of the proteins that surrounds the polypeptide exit tunnel on the outside of the subunit. This is Large ribosomal subunit protein uL24 from Acholeplasma laidlawii (strain PG-8A).